A 156-amino-acid chain; its full sequence is SCP2 sterol-binding domain-containing protein 1 (156 aa).

Residues 44-156 form the SCP2 domain; the sequence is SFPVFQDIRL…ERVFKDWAKF (113 aa).

This Homo sapiens (Human) protein is SCP2 sterol-binding domain-containing protein 1 (SCP2D1).